We begin with the raw amino-acid sequence, 535 residues long: Palmdelphin (535 aa).

Residues 1 to 105 (MEEAELLKER…KEELQVSTKE (105 aa)) are a coiled coil. The interval 423-450 (VVIDDDDDDDDDEEADKKGEENTKESVS) is disordered. Positions 424-436 (VIDDDDDDDDDEE) are enriched in acidic residues. The segment covering 437–446 (ADKKGEENTK) has biased composition (basic and acidic residues).

Belongs to the paralemmin family.

The protein localises to the cytoplasm. Its subcellular location is the cell projection. The protein resides in the dendrite. It is found in the dendritic spine. This is Palmdelphin (palmd) from Xenopus laevis (African clawed frog).